Here is a 479-residue protein sequence, read N- to C-terminus: Dihydrolipoyl dehydrogenase (479 aa).

FAD-binding positions include 41–50 (EKRGALGGTC), lysine 59, alanine 124, and 153–155 (TGS). A disulfide bridge links cysteine 50 with cysteine 55. Residues 190-197 (GGGVIGLE), glutamate 213, isoleucine 247, and glycine 284 contribute to the NAD(+) site. Residues aspartate 325 and 332–335 (MLAH) contribute to the FAD site. The Proton acceptor role is filled by histidine 458.

This sequence belongs to the class-I pyridine nucleotide-disulfide oxidoreductase family. As to quaternary structure, homodimer. The cofactor is FAD.

It carries out the reaction N(6)-[(R)-dihydrolipoyl]-L-lysyl-[protein] + NAD(+) = N(6)-[(R)-lipoyl]-L-lysyl-[protein] + NADH + H(+). In Trypanosoma brucei brucei, this protein is Dihydrolipoyl dehydrogenase.